Reading from the N-terminus, the 494-residue chain is Costunolide synthase (494 aa).

Residues 3–23 traverse the membrane as a helical segment; it reads PLTIVSLVVASLFLFAFWALS. Cysteine 432 lines the heme pocket.

Belongs to the cytochrome P450 family. Heme is required as a cofactor.

Its subcellular location is the membrane. It catalyses the reaction germacra-1(10),4,11(13)-trien-12-oate + reduced [NADPH--hemoprotein reductase] + O2 = (+)-costunolide + oxidized [NADPH--hemoprotein reductase] + 2 H2O. Its function is as follows. Hydroxylates germacrene A acid to 6-alpha-hydroxy-germacrne A acid, a precursor of sesquiterpene lactones that spontaneously undergoes a lactonization which yields costunolide. Costunolide can then spontaneously conjugate to glutathione or cysteine. The protein is Costunolide synthase (CYP71BL3) of Cichorium intybus (Chicory).